We begin with the raw amino-acid sequence, 171 residues long: Co-chaperone protein HscB (171 aa).

In terms of domain architecture, J spans 2-74 (DYFTLFGLPA…LMRAEYLLSL (73 aa)).

This sequence belongs to the HscB family. Interacts with HscA and stimulates its ATPase activity. Interacts with IscU.

Co-chaperone involved in the maturation of iron-sulfur cluster-containing proteins. Seems to help targeting proteins to be folded toward HscA. The sequence is that of Co-chaperone protein HscB from Shigella flexneri serotype 5b (strain 8401).